The sequence spans 245 residues: Ribosome maturation factor RimP (245 aa).

Belongs to the RimP family.

It is found in the cytoplasm. Required for maturation of 30S ribosomal subunits. This chain is Ribosome maturation factor RimP, found in Verminephrobacter eiseniae (strain EF01-2).